Here is a 306-residue protein sequence, read N- to C-terminus: 4-hydroxy-tetrahydrodipicolinate synthase (306 aa).

Thr-49 is a pyruvate binding site. Tyr-136 acts as the Proton donor/acceptor in catalysis. Lys-164 serves as the catalytic Schiff-base intermediate with substrate. Residue Ile-207 coordinates pyruvate.

This sequence belongs to the DapA family. In terms of assembly, homotetramer; dimer of dimers.

It is found in the cytoplasm. The enzyme catalyses L-aspartate 4-semialdehyde + pyruvate = (2S,4S)-4-hydroxy-2,3,4,5-tetrahydrodipicolinate + H2O + H(+). The protein operates within amino-acid biosynthesis; L-lysine biosynthesis via DAP pathway; (S)-tetrahydrodipicolinate from L-aspartate: step 3/4. Catalyzes the condensation of (S)-aspartate-beta-semialdehyde [(S)-ASA] and pyruvate to 4-hydroxy-tetrahydrodipicolinate (HTPA). The sequence is that of 4-hydroxy-tetrahydrodipicolinate synthase from Haloarcula marismortui (strain ATCC 43049 / DSM 3752 / JCM 8966 / VKM B-1809) (Halobacterium marismortui).